The chain runs to 483 residues: Glutamyl-tRNA(Gln) amidotransferase subunit A (483 aa).

Residues Lys-76 and Ser-151 each act as charge relay system in the active site. The active-site Acyl-ester intermediate is Ser-175.

It belongs to the amidase family. GatA subfamily. In terms of assembly, heterotrimer of A, B and C subunits.

The enzyme catalyses L-glutamyl-tRNA(Gln) + L-glutamine + ATP + H2O = L-glutaminyl-tRNA(Gln) + L-glutamate + ADP + phosphate + H(+). Its function is as follows. Allows the formation of correctly charged Gln-tRNA(Gln) through the transamidation of misacylated Glu-tRNA(Gln) in organisms which lack glutaminyl-tRNA synthetase. The reaction takes place in the presence of glutamine and ATP through an activated gamma-phospho-Glu-tRNA(Gln). This chain is Glutamyl-tRNA(Gln) amidotransferase subunit A, found in Pseudomonas fluorescens (strain Pf0-1).